Here is a 327-residue protein sequence, read N- to C-terminus: Dolichyl-phosphate beta-glucosyltransferase ALG5D (327 aa).

Over Met1–Ala6 the chain is Lumenal. Residues Glu7 to Met27 form a helical membrane-spanning segment. Residues Arg28–Phe327 lie on the Cytoplasmic side of the membrane.

The protein belongs to the glycosyltransferase 2 family.

Its subcellular location is the endoplasmic reticulum membrane. It carries out the reaction a di-trans,poly-cis-dolichyl phosphate + UDP-alpha-D-glucose = a di-trans,poly-cis-dolichyl beta-D-glucosyl phosphate + UDP. It functions in the pathway protein modification; protein glycosylation. Its function is as follows. Dolichyl-phosphate beta-glucosyltransferase involved in the glycosylation of glycoproteins through the synthesis of dolichyl beta-D-glucosyl phosphate which serves as a sugar donor for transfer of three glucose residues to the Man-9-GlcNAc-2-PP-dolichol precursor to N-glycans. In Trichomonas vaginalis (strain ATCC PRA-98 / G3), this protein is Dolichyl-phosphate beta-glucosyltransferase ALG5D.